Consider the following 284-residue polypeptide: Kynurenine formamidase avaC (284 aa).

The HGGXW signature appears at 47–51; the sequence is HGGGW. Ser-130 acts as the Nucleophile in catalysis.

The protein belongs to the kynurenine formamidase family.

The catalysed reaction is N-formyl-L-kynurenine + H2O = L-kynurenine + formate + H(+). Its pathway is secondary metabolite metabolism. Its function is as follows. Kynurenine formamidase; part of the cluster that mediates the biosynthesis of a highly modified cyclo-arginine-tryptophan dipeptide (cRW). Within the pathway, avaC catalyzes the deformylation of the cyclo-Arg-formylkynurenine iketopiperazine (DKP), produced by the FAD-dependent monooxygenase avaB. The first step of the pathway is perfornmed by the arginine-containing cyclodipeptide synthase (RCPDS) avaA that acts as the scaffold-generating enzyme and is responsible for formation of the cyclo-Arg-Trp (cRW) diketopiperazine. AvaB then acts as a multifunctional flavoenzyme that is responsible for generating the cyclo-Arg-formylkynurenine DKP, which can be deformylated by avaC. AvaB then further catalyzes an additional N-oxidation followed by cyclization and dehydration. The next step is an N-acetylation of the guanidine group catalyzed by the arginine N-acetyltransferase avaD. The roles of the additional enzymes identified within the ava cluster still have to be determined. This is Kynurenine formamidase avaC from Aspergillus versicolor.